A 368-amino-acid chain; its full sequence is MPDIVNRKVEHVEIAAFENVDGLSSSTFLNDVILVHQGFPGISFSEINTKTKFFRKEISVPVMVTGMTGGRNELGRINKIIAEVAEKFGIPMGVGSQRVAIEKAEARESFAIVRKVAPTIPIIANLGMPQLVKGYGLKEFQDAIQMIEADAIAVHLNPAQEVFQPEGEPEYQIYALEKLRDISKELSVPIIVKESGNGISMETAKLLYSYGIKNFDTSGQGGTNWIAIEMIRDIRRGNWKAESAKNFLDWGVPTAASIMEVRYSVPDSFLVGSGGIRSGLDAAKAIALGADIAGMALPVLKSAIEGKESLEQFFRKIIFELKAAMMLTGSKDVDALKKTSIVILGKLKEWAEYRGINLSIYEKVRKRE.

7-8 lines the substrate pocket; sequence RK. Residues Thr-65, 66 to 68, Ser-96, and Asn-125 contribute to the FMN site; that span reads GMT. 96-98 provides a ligand contact to substrate; the sequence is SQR. Position 160 (Gln-160) interacts with substrate. Residue Glu-161 coordinates Mg(2+). FMN is bound by residues Lys-193, Ser-218, Thr-223, 275 to 277, and 296 to 297; these read GIR and AL.

This sequence belongs to the IPP isomerase type 2 family. Homooctamer. Dimer of tetramers. FMN serves as cofactor. It depends on NADPH as a cofactor. Requires Mg(2+) as cofactor.

It is found in the cytoplasm. It carries out the reaction isopentenyl diphosphate = dimethylallyl diphosphate. In terms of biological role, involved in the biosynthesis of isoprenoids. Catalyzes the 1,3-allylic rearrangement of the homoallylic substrate isopentenyl (IPP) to its allylic isomer, dimethylallyl diphosphate (DMAPP). In Saccharolobus shibatae (strain ATCC 51178 / DSM 5389 / JCM 8931 / NBRC 15437 / B12) (Sulfolobus shibatae), this protein is Isopentenyl-diphosphate delta-isomerase.